A 227-amino-acid chain; its full sequence is MSKTSRSRINRRSIDNNICINSSCNKKKFPDNVVYRNKEKKIIHEECKICFNKRAKLYRERNKAKLKEKQHKWYHKGGGKEHKKLYDKINLEKSNMRDKNRYATDLNFRMKKILRSRLYKVTKKGQYSKKMTEYLGIDINIFRQWIEFQFDENMSWENQGSYWHIDHVIPCKSFDLTEEEEISQCFNWENMRPLEGIENDIKNDKILPDEIKKHKKLVLKFKKKINL.

The stretch at 52-100 forms a coiled coil; the sequence is NKRAKLYRERNKAKLKEKQHKWYHKGGGKEHKKLYDKINLEKSNMRDKN.

This sequence belongs to the mimivirus L246/L426 family.

This is an uncharacterized protein from Acanthamoeba polyphaga mimivirus (APMV).